Consider the following 74-residue polypeptide: ATP synthase subunit c (74 aa).

2 helical membrane-spanning segments follow: residues 8–28 (FIGT…VSNI) and 52–72 (IGAG…MLLI).

Belongs to the ATPase C chain family. F-type ATPases have 2 components, F(1) - the catalytic core - and F(0) - the membrane proton channel. F(1) has five subunits: alpha(3), beta(3), gamma(1), delta(1), epsilon(1). F(0) has three main subunits: a(1), b(2) and c(10-14). The alpha and beta chains form an alternating ring which encloses part of the gamma chain. F(1) is attached to F(0) by a central stalk formed by the gamma and epsilon chains, while a peripheral stalk is formed by the delta and b chains.

The protein resides in the cell inner membrane. In terms of biological role, f(1)F(0) ATP synthase produces ATP from ADP in the presence of a proton or sodium gradient. F-type ATPases consist of two structural domains, F(1) containing the extramembraneous catalytic core and F(0) containing the membrane proton channel, linked together by a central stalk and a peripheral stalk. During catalysis, ATP synthesis in the catalytic domain of F(1) is coupled via a rotary mechanism of the central stalk subunits to proton translocation. Key component of the F(0) channel; it plays a direct role in translocation across the membrane. A homomeric c-ring of between 10-14 subunits forms the central stalk rotor element with the F(1) delta and epsilon subunits. This Rickettsia conorii (strain ATCC VR-613 / Malish 7) protein is ATP synthase subunit c.